Here is a 294-residue protein sequence, read N- to C-terminus: Large ribosomal subunit protein uL18 (294 aa).

A disordered region spans residues 247-275 (RADPSPSAKKAAKPSKRHTAKRLTYDERK). Residues 256 to 267 (KAAKPSKRHTAK) are compositionally biased toward basic residues.

Belongs to the universal ribosomal protein uL18 family. Component of the large ribosomal subunit (LSU).

It is found in the cytoplasm. It localises to the nucleus. In terms of biological role, component of the ribosome, a large ribonucleoprotein complex responsible for the synthesis of proteins in the cell. The small ribosomal subunit (SSU) binds messenger RNAs (mRNAs) and translates the encoded message by selecting cognate aminoacyl-transfer RNA (tRNA) molecules. The large subunit (LSU) contains the ribosomal catalytic site termed the peptidyl transferase center (PTC), which catalyzes the formation of peptide bonds, thereby polymerizing the amino acids delivered by tRNAs into a polypeptide chain. The nascent polypeptides leave the ribosome through a tunnel in the LSU and interact with protein factors that function in enzymatic processing, targeting, and the membrane insertion of nascent chains at the exit of the ribosomal tunnel. This Caenorhabditis briggsae protein is Large ribosomal subunit protein uL18 (rpl-5).